The following is a 1536-amino-acid chain: Alpha-2-macroglobulin (1536 aa).

Residues M1–A23 form the signal peptide. Positions C919–Q922 form a cross-link, isoglutamyl cysteine thioester (Cys-Gln).

It belongs to the protease inhibitor I39 (alpha-2-macroglobulin) family. Bacterial alpha-2-macroglobulin subfamily.

In terms of biological role, protects the bacterial cell from peptidases. This Thermotoga maritima (strain ATCC 43589 / DSM 3109 / JCM 10099 / NBRC 100826 / MSB8) protein is Alpha-2-macroglobulin.